Consider the following 313-residue polypeptide: Ribosomal RNA small subunit methyltransferase H (313 aa).

Residues 35–37 (GGH), Asp-55, Phe-79, Asp-101, and Gln-108 each bind S-adenosyl-L-methionine.

It belongs to the methyltransferase superfamily. RsmH family.

It is found in the cytoplasm. The catalysed reaction is cytidine(1402) in 16S rRNA + S-adenosyl-L-methionine = N(4)-methylcytidine(1402) in 16S rRNA + S-adenosyl-L-homocysteine + H(+). In terms of biological role, specifically methylates the N4 position of cytidine in position 1402 (C1402) of 16S rRNA. This is Ribosomal RNA small subunit methyltransferase H from Musicola paradisiaca (strain Ech703) (Dickeya paradisiaca).